We begin with the raw amino-acid sequence, 625 residues long: Clathrin interactor 1 (625 aa).

Residues 16 to 149 (NVVMNYSEIE…QDDDRLREER (134 aa)) enclose the ENTH domain. R29 provides a ligand contact to a 1,2-diacyl-sn-glycero-3-phospho-(1D-myo-inositol-4,5-bisphosphate). The tract at residues 52–54 (FMY) is interaction with VTI1B. R67 is a binding site for a 1,2-diacyl-sn-glycero-3-phospho-(1D-myo-inositol-4,5-bisphosphate). Interaction with VTI1B regions lie at residues 94–96 (SER) and 142–153 (DDRLREERKKAK). Phosphoserine occurs at positions 163, 166, 173, 205, 210, 227, 245, and 299. The interval 219–331 (FRRKDREDSP…SSGDLVDLFD (113 aa)) is disordered. The segment covering 222–239 (KDREDSPERCSDSDEEKK) has biased composition (basic and acidic residues). T308 carries the phosphothreonine modification. Residues 308-323 (TPQSSVKTSVPSSKSS) are compositionally biased toward low complexity. The residue at position 312 (S312) is a Phosphoserine. The interaction with AP1G1, AP1G2 and GGA2 stretch occupies residues 340–352 (SADLFGGFADFGS). The interaction with AP1G1 and AP1G2 stretch occupies residues 368-380 (GNGDFGDWSAFNQ). At S624 the chain carries Phosphoserine.

The protein belongs to the epsin family. As to quaternary structure, binds clathrin heavy chain and AP-2. Interacts with VTI1B. Interacts with GGA2 (via GAE domain). Interacts with AP1G1 (via GAE domain). Interacts with AP1G2 (via GAE domain). As to expression, ubiquitously expressed at low to intermediate levels.

It is found in the cytoplasm. The protein resides in the perinuclear region. Its subcellular location is the membrane. It localises to the cytoplasmic vesicle. The protein localises to the clathrin-coated vesicle. In terms of biological role, binds to membranes enriched in phosphatidylinositol 4,5-bisphosphate (PtdIns(4,5)P2). May have a role in transport via clathrin-coated vesicles from the trans-Golgi network to endosomes. Stimulates clathrin assembly. The chain is Clathrin interactor 1 (CLINT1) from Homo sapiens (Human).